The chain runs to 131 residues: Small ribosomal subunit protein eS24 (131 aa).

The residue at position 1 (Met-1) is an N-acetylmethionine. Thr-9 carries the post-translational modification Phosphothreonine. A Glycyl lysine isopeptide (Lys-Gly) (interchain with G-Cter in SUMO2) cross-link involves residue Lys-37. The segment covering 90-100 (RLARHGLYEKK) has biased composition (basic and acidic residues). The interval 90 to 131 (RLARHGLYEKKKTSRKQRKERKNRMKKVRGTAKANVGAGKKK) is disordered. Basic residues predominate over residues 101–119 (KTSRKQRKERKNRMKKVRG).

It belongs to the eukaryotic ribosomal protein eS24 family. In terms of assembly, component of the small ribosomal subunit. Part of the small subunit (SSU) processome, composed of more than 70 proteins and the RNA chaperone small nucleolar RNA (snoRNA) U3.

The protein resides in the cytoplasm. Its subcellular location is the nucleus. It is found in the nucleolus. Functionally, component of the small ribosomal subunit. The ribosome is a large ribonucleoprotein complex responsible for the synthesis of proteins in the cell. Required for processing of pre-rRNA and maturation of 40S ribosomal subunits. Part of the small subunit (SSU) processome, first precursor of the small eukaryotic ribosomal subunit. During the assembly of the SSU processome in the nucleolus, many ribosome biogenesis factors, an RNA chaperone and ribosomal proteins associate with the nascent pre-rRNA and work in concert to generate RNA folding, modifications, rearrangements and cleavage as well as targeted degradation of pre-ribosomal RNA by the RNA exosome. The protein is Small ribosomal subunit protein eS24 (RPS24) of Pongo abelii (Sumatran orangutan).